A 350-amino-acid polypeptide reads, in one-letter code: MAAAGPAAGPTGPEPMPSYAQLVQRGWGSALAAARGCTDCGWGLARRGLAEHAHLAPPELLLLALGALGWTALRSAATARLFRPLAKRCCLQPRDAAKMPESAWKFLFYLGSWSYSAYLLFGTDYPFFHDPPSVFYDWTPGMAVPRDIAAAYLLQGSFYGHSIYATLYMDTWRKDSVVMLLHHVVTLILIVSSYAFRYHNVGILVLFLHDISDVQLEFTKLNIYFKSRGGSYHRLHALAADLGCLSFGFSWFWFRLYWFPLKVLYATSHCSLRTVPDIPFYFFFNALLLLLTLMNLYWFLYIVAFAAKVLTGQVHELKDLREYDTAEAQSLKPSKAEKPLRNGLVKDKRF.

Ala2 carries the post-translational modification N-acetylalanine. 6 helical membrane-spanning segments follow: residues 53 to 73, 103 to 123, 148 to 168, 176 to 196, 239 to 259, and 287 to 307; these read AHLA…WTAL, AWKF…LFGT, IAAA…ATLY, SVVM…SYAF, AADL…LYWF, and LLLL…AFAA. In terms of domain architecture, TLC spans 97 to 311; that stretch reads AKMPESAWKF…IVAFAAKVLT (215 aa).

Post-translationally, acetylated. Deacetylation by SIRT3 increases enzyme activity and promotes mitochondrial ceramide accumulation.

The protein localises to the endoplasmic reticulum membrane. The enzyme catalyses a sphingoid base + octadecanoyl-CoA = an N-octadecanoyl-sphingoid base + CoA + H(+). It catalyses the reaction sphinganine + octadecanoyl-CoA = N-(octadecanoyl)-sphinganine + CoA + H(+). The catalysed reaction is hexadecasphinganine + octadecanoyl-CoA = N-octadecanoylhexadecasphinganine + CoA + H(+). It carries out the reaction sphing-4-enine + octadecanoyl-CoA = N-octadecanoylsphing-4-enine + CoA + H(+). The enzyme catalyses heptadecasphing-4-enine + octadecanoyl-CoA = N-octadecanoyl-heptadecasphing-4-enine + CoA + H(+). It catalyses the reaction 2-hydroxyoctadecanoyl-CoA + sphinganine = N-(2-hydroxyoctadecanoyl)-sphinganine + CoA + H(+). The catalysed reaction is eicosanoyl-CoA + sphinganine = N-eicosanoylsphinganine + CoA + H(+). It participates in lipid metabolism; sphingolipid metabolism. Inhibited by fumonisin B1. Ceramide synthase that catalyzes the transfer of the acyl chain from acyl-CoA to a sphingoid base, with high selectivity toward stearoyl-CoA (octadecanoyl-CoA; C18:0-CoA). N-acylates sphinganine and sphingosine bases to form dihydroceramides and ceramides in de novo synthesis and salvage pathways, respectively. Plays a predominant role in skeletal muscle in regulating C18 ceramide and dihydroceramide levels with an impact on whole-body glucose metabolism and insulin sensitivity. Protects from diet-induced obesity by suppressing the uptake of glucose in multiple organs in a FGF21-dependent way. Generates C18 ceramides in the brain, playing a critical role in cerebellar development and Purkinje cell function. In response to cellular stress mediates mitophagy, a known defense mechanism against cell transformation and aging. Upon mitochondria fission, generates C18 ceramides that anchor lipidated MAP1LC3B/LC3B-II autophagolysosomes to outer mitochondrial membranes to eliminate damaged mitochondria. The protein is Ceramide synthase 1 of Homo sapiens (Human).